We begin with the raw amino-acid sequence, 212 residues long: Pyrrolidone-carboxylate peptidase (212 aa).

Catalysis depends on residues Glu78, Cys141, and His165.

It belongs to the peptidase C15 family. In terms of assembly, homotetramer.

It is found in the cytoplasm. It carries out the reaction Release of an N-terminal pyroglutamyl group from a polypeptide, the second amino acid generally not being Pro.. Removes 5-oxoproline from various penultimate amino acid residues except L-proline. In Staphylococcus aureus (strain NCTC 8325 / PS 47), this protein is Pyrrolidone-carboxylate peptidase.